The chain runs to 283 residues: Acyl-coenzyme A diphosphatase FITM2 (283 aa).

A compositionally biased stretch (low complexity) spans 1 to 11 (MSTRRSSTRAD). The disordered stretch occupies residues 1–21 (MSTRRSSTRADSTTKRPASPN). Residues 1-39 (MSTRRSSTRADSTTKRPASPNSTPNAALGIFVAIARQIL) are Cytoplasmic-facing. A helical membrane pass occupies residues 40-60 (FIDARKVALFYLAFVTVLSFI). The Lumenal portion of the chain corresponds to 61–81 (ESRIELDSTYYLVQKHSVLNQ). A helical membrane pass occupies residues 82-102 (YGVKMGWFWTLVIVGPFIWFS). At 103–120 (SKAHNRRDRDQPIVDVCR) the chain is on the cytoplasmic side. Residues 121 to 141 (LGVGTACWYFSVQFFHKVLAL) traverse the membrane as a helical segment. Over 142-168 (TSMCDKGRTLTRAQCSEKEGVWTPGYD) the chain is Lumenal. A helical transmembrane segment spans residues 169–189 (ISGHCFLMIYSILIITEEAIA). The active site involves His-172. Over 190–219 (YRHYQQVTDAVHQMDGDREEHDRLTRCIQY) the chain is Cytoplasmic. The next 2 membrane-spanning stretches (helical) occupy residues 220–240 (FFVAMLFLHAFWFKQIIISVL) and 241–261 (YYHIFIEEILGAVAAVVCWFV). His-243 is an active-site residue. At 262–283 (TYRMLYPAGFLASPIRRTVGRK) the chain is on the cytoplasmic side.

It belongs to the FIT family. FIT2 subfamily.

Its subcellular location is the endoplasmic reticulum membrane. It carries out the reaction an acyl-CoA + H2O = an acyl-4'-phosphopantetheine + adenosine 3',5'-bisphosphate + 2 H(+). Its function is as follows. Fatty acyl-coenzyme A (CoA) diphosphatase that hydrolyzes fatty acyl-CoA to yield acyl-4'-phosphopantetheine and adenosine 3',5'-bisphosphate. Preferentially hydrolyzes unsaturated long-chain acyl-CoA substrates in the endoplasmic reticulum (ER) lumen. This catalytic activity is required for maintaining ER structure and for lipid droplets (LDs) biogenesis, which are lipid storage organelles involved in maintaining lipid and energy homeostasis. May directly bind to diacylglycerol (DAGs) and triacylglycerol, which is also important for LD biogenesis. May support directional budding of nacent LDs from the ER into the cytosol by reducing DAG levels at sites of LD formation. May play a role in the regulation of cell morphology, ER morphology and cytoskeletal organization. The chain is Acyl-coenzyme A diphosphatase FITM2 from Caenorhabditis elegans.